Reading from the N-terminus, the 295-residue chain is ATP synthase gamma chain (295 aa).

This sequence belongs to the ATPase gamma chain family. F-type ATPases have 2 components, CF(1) - the catalytic core - and CF(0) - the membrane proton channel. CF(1) has five subunits: alpha(3), beta(3), gamma(1), delta(1), epsilon(1). CF(0) has three main subunits: a, b and c.

The protein resides in the cell membrane. Its function is as follows. Produces ATP from ADP in the presence of a proton gradient across the membrane. The gamma chain is believed to be important in regulating ATPase activity and the flow of protons through the CF(0) complex. The sequence is that of ATP synthase gamma chain from Desulforudis audaxviator (strain MP104C).